A 272-amino-acid chain; its full sequence is Undecaprenyl-diphosphatase (272 aa).

The next 7 helical transmembrane spans lie at 22–42, 45–65, 92–112, 118–138, 189–209, 228–248, and 251–271; these read FLPV…GFTG, AETF…VVFW, SHII…HDVI, PQSV…AEIL, YTAS…ASGL, VGFV…LALI, and ISFI…YWVF.

This sequence belongs to the UppP family.

The protein localises to the cell inner membrane. It carries out the reaction di-trans,octa-cis-undecaprenyl diphosphate + H2O = di-trans,octa-cis-undecaprenyl phosphate + phosphate + H(+). In terms of biological role, catalyzes the dephosphorylation of undecaprenyl diphosphate (UPP). Confers resistance to bacitracin. The polypeptide is Undecaprenyl-diphosphatase (Photorhabdus laumondii subsp. laumondii (strain DSM 15139 / CIP 105565 / TT01) (Photorhabdus luminescens subsp. laumondii)).